The following is a 198-amino-acid chain: Nucleoid occlusion factor SlmA (198 aa).

Residues 10 to 70 (NRREEILQSL…SLIEFIEDSL (61 aa)) enclose the HTH tetR-type domain. The H-T-H motif DNA-binding region spans 33–52 (TTAKLAASVGVSEAALYRHF). Residues 117–144 (EQDRLQGRINQLFERIEAQLRQVLREKR) adopt a coiled-coil conformation.

The protein belongs to the nucleoid occlusion factor SlmA family. As to quaternary structure, homodimer. Interacts with FtsZ.

It is found in the cytoplasm. It localises to the nucleoid. Its function is as follows. Required for nucleoid occlusion (NO) phenomenon, which prevents Z-ring formation and cell division over the nucleoid. Acts as a DNA-associated cell division inhibitor that binds simultaneously chromosomal DNA and FtsZ, and disrupts the assembly of FtsZ polymers. SlmA-DNA-binding sequences (SBS) are dispersed on non-Ter regions of the chromosome, preventing FtsZ polymerization at these regions. This is Nucleoid occlusion factor SlmA from Citrobacter koseri (strain ATCC BAA-895 / CDC 4225-83 / SGSC4696).